The primary structure comprises 76 residues: Defensin-like protein 164 (76 aa).

Positions 1-25 (MAKLLCSYLFICMFVLSGFLVFSSA) are cleaved as a signal peptide. 4 cysteine pairs are disulfide-bonded: cysteine 31-cysteine 76, cysteine 41-cysteine 61, cysteine 46-cysteine 70, and cysteine 50-cysteine 72.

This sequence belongs to the DEFL family.

The protein resides in the secreted. The chain is Defensin-like protein 164 (LCR38) from Arabidopsis thaliana (Mouse-ear cress).